We begin with the raw amino-acid sequence, 172 residues long: GTP-dependent dephospho-CoA kinase (172 aa).

Asp40, Val41, Val42, Asp59, and Glu112 together coordinate GTP.

This sequence belongs to the GTP-dependent DPCK family.

The catalysed reaction is 3'-dephospho-CoA + GTP = GDP + CoA + H(+). The protein operates within cofactor biosynthesis; coenzyme A biosynthesis. Its function is as follows. Catalyzes the GTP-dependent phosphorylation of the 3'-hydroxyl group of dephosphocoenzyme A to form coenzyme A (CoA). This chain is GTP-dependent dephospho-CoA kinase, found in Methanospirillum hungatei JF-1 (strain ATCC 27890 / DSM 864 / NBRC 100397 / JF-1).